Consider the following 127-residue polypeptide: Fluoride-specific ion channel FluC (127 aa).

Transmembrane regions (helical) follow at residues 1-21, 32-52, 71-91, and 96-116; these read MMSY…RHMV, EFPF…GAVV, TGIL…VLLY, and VFLA…ALLL. Na(+)-binding residues include G75 and T78.

This sequence belongs to the fluoride channel Fluc/FEX (TC 1.A.43) family.

It is found in the cell inner membrane. It catalyses the reaction fluoride(in) = fluoride(out). With respect to regulation, na(+) is not transported, but it plays an essential structural role and its presence is essential for fluoride channel function. In terms of biological role, fluoride-specific ion channel. Important for reducing fluoride concentration in the cell, thus reducing its toxicity. This chain is Fluoride-specific ion channel FluC, found in Granulibacter bethesdensis (strain ATCC BAA-1260 / CGDNIH1).